Reading from the N-terminus, the 182-residue chain is UPF0200 protein Mthe_1012 (182 aa).

Position 8–15 (8–15) interacts with ATP; it reads GMPGSGKS.

Belongs to the UPF0200 family.

The protein is UPF0200 protein Mthe_1012 of Methanothrix thermoacetophila (strain DSM 6194 / JCM 14653 / NBRC 101360 / PT) (Methanosaeta thermophila).